A 155-amino-acid chain; its full sequence is Putative pre-16S rRNA nuclease (155 aa).

This sequence belongs to the YqgF nuclease family.

It is found in the cytoplasm. Functionally, could be a nuclease involved in processing of the 5'-end of pre-16S rRNA. This Xanthomonas axonopodis pv. citri (strain 306) protein is Putative pre-16S rRNA nuclease.